The sequence spans 434 residues: 3-phosphoshikimate 1-carboxyvinyltransferase (434 aa).

Lys22, Ser23, and Arg27 together coordinate 3-phosphoshikimate. Lys22 lines the phosphoenolpyruvate pocket. Gly93 and Arg121 together coordinate phosphoenolpyruvate. Residues Ser168, Ser169, Gln170, Ser199, Asp320, and Lys347 each contribute to the 3-phosphoshikimate site. Residue Gln170 coordinates phosphoenolpyruvate. The active-site Proton acceptor is Asp320. Positions 351, 395, and 420 each coordinate phosphoenolpyruvate.

The protein belongs to the EPSP synthase family. In terms of assembly, monomer.

It localises to the cytoplasm. The enzyme catalyses 3-phosphoshikimate + phosphoenolpyruvate = 5-O-(1-carboxyvinyl)-3-phosphoshikimate + phosphate. Its pathway is metabolic intermediate biosynthesis; chorismate biosynthesis; chorismate from D-erythrose 4-phosphate and phosphoenolpyruvate: step 6/7. In terms of biological role, catalyzes the transfer of the enolpyruvyl moiety of phosphoenolpyruvate (PEP) to the 5-hydroxyl of shikimate-3-phosphate (S3P) to produce enolpyruvyl shikimate-3-phosphate and inorganic phosphate. In Cupriavidus taiwanensis (strain DSM 17343 / BCRC 17206 / CCUG 44338 / CIP 107171 / LMG 19424 / R1) (Ralstonia taiwanensis (strain LMG 19424)), this protein is 3-phosphoshikimate 1-carboxyvinyltransferase.